Reading from the N-terminus, the 314-residue chain is tRNA dimethylallyltransferase (314 aa).

15–22 is a binding site for ATP; that stretch reads GPTATGKS. 17 to 22 serves as a coordination point for substrate; that stretch reads TATGKS. An interaction with substrate tRNA region spans residues 40-43; sequence DSML.

It belongs to the IPP transferase family. In terms of assembly, monomer. Requires Mg(2+) as cofactor.

The enzyme catalyses adenosine(37) in tRNA + dimethylallyl diphosphate = N(6)-dimethylallyladenosine(37) in tRNA + diphosphate. Catalyzes the transfer of a dimethylallyl group onto the adenine at position 37 in tRNAs that read codons beginning with uridine, leading to the formation of N6-(dimethylallyl)adenosine (i(6)A). This chain is tRNA dimethylallyltransferase, found in Pelotomaculum thermopropionicum (strain DSM 13744 / JCM 10971 / SI).